Consider the following 1330-residue polypeptide: Protein PUTATIVE RECOMBINATION INITIATION DEFECT 1 (1330 aa).

A disordered region spans residues 1310 to 1330 (REGRVSPIQEETRQMQTERIV).

Interacts with SPO11-1. According to PubMed:28855712, may interact with SPO11-2; this is in contradiction with PubMed:9461215 which claims that it seems to not interact with SPO11-2. Binds to DFO, PRD3 and MTOPVIB. Facilitates an interaction between PRD3 and DFO. Expressed in flower buds.

The protein localises to the nucleus. Functionally, involved in DNA cleavage that forms the double-strand breaks (DSB) that initiate meiotic recombination. The polypeptide is Protein PUTATIVE RECOMBINATION INITIATION DEFECT 1 (Arabidopsis thaliana (Mouse-ear cress)).